We begin with the raw amino-acid sequence, 212 residues long: ATP-dependent dethiobiotin synthetase BioD (212 aa).

Residue glycine 10–phenylalanine 15 participates in ATP binding. Residue threonine 14 coordinates Mg(2+). The active site involves lysine 36. Serine 40 is a substrate binding site. ATP is bound by residues aspartate 45, glutamate 106–glycine 109, and asparagine 167–cysteine 168. Positions 45 and 106 each coordinate Mg(2+).

The protein belongs to the dethiobiotin synthetase family. In terms of assembly, homodimer. Mg(2+) is required as a cofactor.

Its subcellular location is the cytoplasm. The catalysed reaction is (7R,8S)-7,8-diammoniononanoate + CO2 + ATP = (4R,5S)-dethiobiotin + ADP + phosphate + 3 H(+). Its pathway is cofactor biosynthesis; biotin biosynthesis; biotin from 7,8-diaminononanoate: step 1/2. Functionally, catalyzes a mechanistically unusual reaction, the ATP-dependent insertion of CO2 between the N7 and N8 nitrogen atoms of 7,8-diaminopelargonic acid (DAPA, also called 7,8-diammoniononanoate) to form a ureido ring. This chain is ATP-dependent dethiobiotin synthetase BioD, found in Methanococcus aeolicus (strain ATCC BAA-1280 / DSM 17508 / OCM 812 / Nankai-3).